We begin with the raw amino-acid sequence, 344 residues long: Nuclear distribution protein nudE homolog 1 (344 aa).

Residues 1 to 93 are self-association; it reads MEDSGKTFES…MQHSEGYRQI (93 aa). Residues 18 to 188 adopt a coiled-coil conformation; sequence WRDLAMTYKQ…ELAVQQKQDK (171 aa). Positions 88–156 are interaction with PAFAH1B1; sequence EGYRQISALE…ERNAFLESEL (69 aa). The interval 167 to 290 is interaction with CENPF; it reads QRLKDEARDL…QSPSRTSGPA (124 aa). The interval 181-246 is disordered; sequence AVQQKQDKPR…DSSTSGTPLT (66 aa). S211 carries the post-translational modification Phosphoserine. T215 and T228 each carry phosphothreonine. A Phosphoserine modification is found at S239. A phosphothreonine mark is found at T243 and T246. Residue C274 is the site of S-palmitoyl cysteine; by ZDHHC2, ZDHHC3 and ZDHHC7 attachment. Positions 279–289 are enriched in polar residues; it reads YDQSPSRTSGP. The disordered stretch occupies residues 279–337; sequence YDQSPSRTSGPASGRGTKNRDGVDRRPGSTSVGDKGSGKRLEFGKPASEPASPALPSAQ. The residue at position 282 (S282) is a Phosphoserine. The segment covering 296–305 has biased composition (basic and acidic residues); the sequence is KNRDGVDRRP. Position 309 is a phosphoserine (S309). Residues 324–336 show a composition bias toward low complexity; sequence PASEPASPALPSA.

This sequence belongs to the nudE family. In terms of assembly, homodimer. Interacts with dynactin and PCM1. Interacts with CENPF, LIS1, CNTRL, dynein, tubulin gamma, PAFAH1B1, PCNT, SLMAP and TCP1. Interacts with ZNF365. Interacts with RAB9A; the interaction leads to RAB9A-dynein motor tethering. Interacts (via C-terminus) with MCRS1 (via C-terminus); phosphorylation of NDE1 inhibits the interaction. In terms of processing, phosphorylated in mitosis. Phosphorylation at Thr-246 is essential for the G2/M transition. As to expression, highly expressed in ovary. Also expressed in brain, heart, kidney, large intestine, liver, lung, small intestine and testis.

The protein resides in the cytoplasm. It is found in the cytoskeleton. It localises to the microtubule organizing center. Its subcellular location is the centrosome. The protein localises to the spindle. The protein resides in the chromosome. It is found in the centromere. It localises to the kinetochore. Its subcellular location is the cleavage furrow. The protein localises to the cytoplasmic vesicle membrane. Required for centrosome duplication and formation and function of the mitotic spindle. Essential for the development of the cerebral cortex. May regulate the production of neurons by controlling the orientation of the mitotic spindle during division of cortical neuronal progenitors of the proliferative ventricular zone of the brain. Orientation of the division plane perpendicular to the layers of the cortex gives rise to two proliferative neuronal progenitors whereas parallel orientation of the division plane yields one proliferative neuronal progenitor and a postmitotic neuron. A premature shift towards a neuronal fate within the progenitor population may result in an overall reduction in the final number of neurons and an increase in the number of neurons in the deeper layers of the cortex. Acts as a RAB9A/B effector that tethers RAB9-associated late endosomes to the dynein motor for their retrograde transport to the trans-Golgi network. The polypeptide is Nuclear distribution protein nudE homolog 1 (Mus musculus (Mouse)).